Consider the following 887-residue polypeptide: Chaperone protein ClpB 2 (887 aa).

The Clp R domain occupies 6–147 (PTKFTDKAWE…AATVKAIRGA (142 aa)). Repeat regions lie at residues 9–73 (FTDK…ARQQ) and 84–147 (CGRS…IRGA). The NBD1 stretch occupies residues 160-342 (AALEKYGRDL…RRFQQVYIGQ (183 aa)). 207-214 (GEPGVGKT) contacts ATP. The tract at residues 343-559 (PSVEDTISIL…IAEIVAKWTG (217 aa)) is linker. The stretch at 393–535 (IDLVDEAAAK…TEAQLLELQA (143 aa)) forms a coiled coil. Positions 569–780 (ERQKLLQLEQ…RIDDVILFHG (212 aa)) are NBD2. 619 to 626 (GPTGVGKT) is an ATP binding site. The segment at 781–887 (LGRTELAQIA…TGDRDTVSAS (107 aa)) is C-terminal.

Belongs to the ClpA/ClpB family. In terms of assembly, homohexamer. The oligomerization is ATP-dependent.

Its subcellular location is the cytoplasm. In terms of biological role, part of a stress-induced multi-chaperone system, it is involved in the recovery of the cell from heat-induced damage, in cooperation with DnaK, DnaJ and GrpE. Acts before DnaK, in the processing of protein aggregates. Protein binding stimulates the ATPase activity; ATP hydrolysis unfolds the denatured protein aggregates, which probably helps expose new hydrophobic binding sites on the surface of ClpB-bound aggregates, contributing to the solubilization and refolding of denatured protein aggregates by DnaK. This Thermosynechococcus vestitus (strain NIES-2133 / IAM M-273 / BP-1) protein is Chaperone protein ClpB 2 (clpB2).